Consider the following 116-residue polypeptide: Peptidyl-tRNA hydrolase (116 aa).

The protein belongs to the PTH2 family.

It localises to the cytoplasm. The catalysed reaction is an N-acyl-L-alpha-aminoacyl-tRNA + H2O = an N-acyl-L-amino acid + a tRNA + H(+). The natural substrate for this enzyme may be peptidyl-tRNAs which drop off the ribosome during protein synthesis. In Methanococcus vannielii (strain ATCC 35089 / DSM 1224 / JCM 13029 / OCM 148 / SB), this protein is Peptidyl-tRNA hydrolase.